We begin with the raw amino-acid sequence, 210 residues long: uncharacterized protein (210 aa).

The next 6 membrane-spanning stretches (helical) occupy residues 9–29 (WVVT…IIAK), 35–55 (LIVN…MAWP), 64–84 (GPAV…VVAV), 91–111 (GLYG…AAMN), 149–169 (IWFS…AVFW), and 190–210 (IGQA…LFPV).

The protein resides in the cell membrane. This is an uncharacterized protein from Mycobacterium bovis (strain ATCC BAA-935 / AF2122/97).